Here is a 343-residue protein sequence, read N- to C-terminus: MESTPKKAPRSKFPALLVVALALVALVFVIWRVDSAPSTNDAYVSADTIDVVPEVSGRIVELAVTDNQAVKQGDLLFRIDPRPYEANLAKSEASLAALDKQIMLTQRSVDAQQFGADSVNATVEKARAAAKQATDTLRRTEPLLKEGFVSAEDVDRARTAQRAAEADLNAVLLQAQSAASAVSGVDALVAQRAAVEADIALTKLHLEMATVRAPFDGRVISLKTSVGQFASAMRPIFTLIDTRHWYVIANFRETDLKNIRSGTPATIRLMSDSGKTFEGKVDSIGYGVLPDDGGLVLGGLPKVSRSINWVRVAQRFPVKIMVDKPDPEMFRIGASAVANLEPQ.

Residues 1–12 (MESTPKKAPRSK) lie on the Cytoplasmic side of the membrane. A helical; Signal-anchor for type II membrane protein membrane pass occupies residues 13–33 (FPALLVVALALVALVFVIWRV). At 34 to 343 (DSAPSTNDAY…ASAVANLEPQ (310 aa)) the chain is on the periplasmic side.

Belongs to the membrane fusion protein (MFP) (TC 8.A.1) family. Could be part of a tripartite efflux system composed of MdtN, MdtO and MdtP.

It localises to the cell inner membrane. Its function is as follows. Could be involved in resistance to puromycin, acriflavine and tetraphenylarsonium chloride. This is Multidrug resistance protein MdtN (mdtN) from Escherichia coli O157:H7.